Reading from the N-terminus, the 150-residue chain is UPF0756 membrane protein ECA1265 (150 aa).

4 helical membrane-spanning segments follow: residues 1-21 (MAYI…GIIS), 51-71 (YGLS…IASG), 82-102 (FLHW…WLGG), and 127-147 (ALFR…SLLI).

The protein belongs to the UPF0756 family.

The protein resides in the cell membrane. This chain is UPF0756 membrane protein ECA1265, found in Pectobacterium atrosepticum (strain SCRI 1043 / ATCC BAA-672) (Erwinia carotovora subsp. atroseptica).